The following is a 391-amino-acid chain: Histamine H4 receptor (391 aa).

At 1 to 19 (MSESNGTDVLPLTAQVPLA) the chain is on the extracellular side. Asn-5 is a glycosylation site (N-linked (GlcNAc...) asparagine). A helical transmembrane segment spans residues 20–40 (FLMSLLAFAITIGNAVVILAF). Over 41 to 52 (VADRNLRHRSNY) the chain is Cytoplasmic. Residues 53 to 73 (FFLNLAISDFFVGVISIPLYI) form a helical membrane-spanning segment. Residues 74-87 (PHTLFNWNFGSGIC) are Extracellular-facing. The cysteines at positions 87 and 166 are disulfide-linked. Residues 88 to 108 (MFWLITDYLLCTASVYSIVLI) form a helical membrane-spanning segment. The Cytoplasmic portion of the chain corresponds to 109–131 (SYDRYQSVSNAVRYRAQHTGILK). A helical transmembrane segment spans residues 132–152 (IVAQMVAVWILAFLVNGPMIL). Topologically, residues 153-174 (ASDSWKNSTNTEECEPGFVTEW) are extracellular. N-linked (GlcNAc...) asparagine glycosylation is present at Asn-159. Residues 175 to 195 (YILAITAFLEFLLPVSLVVYF) form a helical membrane-spanning segment. Over 196 to 306 (SVQIYWSLWK…LLRGRKLARS (111 aa)) the chain is Cytoplasmic. A helical membrane pass occupies residues 307-327 (LAVLLSAFAICWAPYCLFTIV). Residues 328 to 343 (LSTYRRGERPKSIWYS) are Extracellular-facing. A helical membrane pass occupies residues 344–364 (IAFWLQWFNSLINPFLYPLCH). At 365–391 (RRFQKAFWKILCVTKQPAPSQTQSVSS) the chain is on the cytoplasmic side.

It belongs to the G-protein coupled receptor 1 family. In terms of assembly, interacts with TSPAN4.

The protein resides in the cell membrane. In terms of biological role, the H4 subclass of histamine receptors could mediate the histamine signals in peripheral tissues. Displays a significant level of constitutive activity (spontaneous activity in the absence of agonist). This is Histamine H4 receptor (Hrh4) from Rattus norvegicus (Rat).